Consider the following 88-residue polypeptide: Large ribosomal subunit protein bL27 (88 aa).

Residues 1 to 25 (MAHKKGASSSRNGRDSNAQRLGVKR) form a disordered region. Residues 7 to 19 (ASSSRNGRDSNAQ) show a composition bias toward polar residues.

The protein belongs to the bacterial ribosomal protein bL27 family.

In Nocardia farcinica (strain IFM 10152), this protein is Large ribosomal subunit protein bL27.